The primary structure comprises 474 residues: Eukaryotic translation initiation factor 3 subunit L (474 aa).

One can recognise a PCI domain in the interval 255 to 449 (DAIRMFSHIL…DLDYALQGDL (195 aa)).

The protein belongs to the eIF-3 subunit L family. In terms of assembly, component of the eukaryotic translation initiation factor 3 (eIF-3) complex.

The protein resides in the cytoplasm. Its function is as follows. Component of the eukaryotic translation initiation factor 3 (eIF-3) complex, which is involved in protein synthesis of a specialized repertoire of mRNAs and, together with other initiation factors, stimulates binding of mRNA and methionyl-tRNAi to the 40S ribosome. The eIF-3 complex specifically targets and initiates translation of a subset of mRNAs involved in cell proliferation. The protein is Eukaryotic translation initiation factor 3 subunit L of Neurospora crassa (strain ATCC 24698 / 74-OR23-1A / CBS 708.71 / DSM 1257 / FGSC 987).